Reading from the N-terminus, the 400-residue chain is DNA primase large subunit PriL (400 aa).

4 residues coordinate [4Fe-4S] cluster: Cys-247, Cys-356, Cys-367, and Cys-373.

Belongs to the eukaryotic-type primase large subunit family. As to quaternary structure, heterodimer of a small subunit (PriS) and a large subunit (PriL). [4Fe-4S] cluster is required as a cofactor.

Regulatory subunit of DNA primase, an RNA polymerase that catalyzes the synthesis of short RNA molecules used as primers for DNA polymerase during DNA replication. Stabilizes and modulates the activity of the small subunit, increasing the rate of DNA synthesis, and conferring RNA synthesis capability. The DNA polymerase activity may enable DNA primase to also catalyze primer extension after primer synthesis. May also play a role in DNA repair. The chain is DNA primase large subunit PriL from Thermococcus kodakarensis (strain ATCC BAA-918 / JCM 12380 / KOD1) (Pyrococcus kodakaraensis (strain KOD1)).